Reading from the N-terminus, the 180-residue chain is ATP-dependent protease subunit HslV (180 aa).

The active site involves T9. A164, C167, and T170 together coordinate Na(+).

The protein belongs to the peptidase T1B family. HslV subfamily. In terms of assembly, a double ring-shaped homohexamer of HslV is capped on each side by a ring-shaped HslU homohexamer. The assembly of the HslU/HslV complex is dependent on binding of ATP.

The protein localises to the cytoplasm. It catalyses the reaction ATP-dependent cleavage of peptide bonds with broad specificity.. With respect to regulation, allosterically activated by HslU binding. Functionally, protease subunit of a proteasome-like degradation complex believed to be a general protein degrading machinery. This is ATP-dependent protease subunit HslV from Leptospira interrogans serogroup Icterohaemorrhagiae serovar Lai (strain 56601).